We begin with the raw amino-acid sequence, 110 residues long: Large ribosomal subunit protein uL22 (110 aa).

This sequence belongs to the universal ribosomal protein uL22 family. In terms of assembly, part of the 50S ribosomal subunit.

Functionally, this protein binds specifically to 23S rRNA; its binding is stimulated by other ribosomal proteins, e.g. L4, L17, and L20. It is important during the early stages of 50S assembly. It makes multiple contacts with different domains of the 23S rRNA in the assembled 50S subunit and ribosome. Its function is as follows. The globular domain of the protein is located near the polypeptide exit tunnel on the outside of the subunit, while an extended beta-hairpin is found that lines the wall of the exit tunnel in the center of the 70S ribosome. In Yersinia pseudotuberculosis serotype O:1b (strain IP 31758), this protein is Large ribosomal subunit protein uL22.